A 384-amino-acid chain; its full sequence is Cytochrome b (384 aa).

The next 4 helical transmembrane spans lie at 32–52, 76–98, 113–133, and 179–199; these read FGSL…FLAM, WLLR…LHMA, LWNM…MGYC, and FFSL…LHLL. Heme b-binding residues include H82 and H96. H183 and H197 together coordinate heme b. A ubiquinone is bound at residue H202. The next 4 membrane-spanning stretches (helical) occupy residues 225-245, 289-309, 321-341, and 348-368; these read FLFK…FLIS, MMGV…PFVD, LSKI…LIGA, and YIII…ILLP.

This sequence belongs to the cytochrome b family. Fungal cytochrome b-c1 complex contains 10 subunits; 3 respiratory subunits, 2 core proteins and 5 low-molecular weight proteins. Cytochrome b-c1 complex is a homodimer. Requires heme b as cofactor.

It is found in the mitochondrion inner membrane. In terms of biological role, component of the ubiquinol-cytochrome c reductase complex (complex III or cytochrome b-c1 complex) that is part of the mitochondrial respiratory chain. The b-c1 complex mediates electron transfer from ubiquinol to cytochrome c. Contributes to the generation of a proton gradient across the mitochondrial membrane that is then used for ATP synthesis. The sequence is that of Cytochrome b (COB) from Starmerella bacillaris (Yeast).